The primary structure comprises 341 residues: Zinc transporter ZIP11 (341 aa).

7 consecutive transmembrane segments (helical) span residues 12-32 (LLGT…VFVF), 44-64 (LGFA…APAV), 72-92 (GFGS…AAFV), 193-213 (IALL…AVGV), 262-284 (FWYG…FAVV), 289-306 (ILPY…YVIM), and 321-341 (LASW…VGLG).

This sequence belongs to the ZIP transporter (TC 2.A.5) family.

It is found in the cell membrane. Its subcellular location is the nucleus. It localises to the cytoplasm. The protein resides in the golgi apparatus. It catalyses the reaction Zn(2+)(in) = Zn(2+)(out). The catalysed reaction is Cu(2+)(in) = Cu(2+)(out). In terms of biological role, zinc importer that regulates cytosolic zinc concentrations either via zinc influx from the extracellular compartment or efflux from intracellular organelles such as Golgi apparatus. May transport copper ions as well. The transport mechanism remains to be elucidated. This Bos taurus (Bovine) protein is Zinc transporter ZIP11 (SLC39A11).